Here is a 96-residue protein sequence, read N- to C-terminus: MNIRPLHDRVIVKRLEVESTSAGGIVLTGSAAEKSTRGEVLAVGNGRILENGTVRPLDVKVGDVVIFNEGYGVKKEKIDGQEVLILSEMDLMAVVD.

Belongs to the GroES chaperonin family. In terms of assembly, heptamer of 7 subunits arranged in a ring. Interacts with the chaperonin GroEL.

It is found in the cytoplasm. Functionally, together with the chaperonin GroEL, plays an essential role in assisting protein folding. The GroEL-GroES system forms a nano-cage that allows encapsulation of the non-native substrate proteins and provides a physical environment optimized to promote and accelerate protein folding. GroES binds to the apical surface of the GroEL ring, thereby capping the opening of the GroEL channel. The protein is Co-chaperonin GroES of Shewanella amazonensis (strain ATCC BAA-1098 / SB2B).